The chain runs to 545 residues: Esterase-5C (545 aa).

Positions 1-19 (MLAARLIILLSFYWLSASA) are cleaved as a signal peptide. Cysteine 84 and cysteine 103 are disulfide-bonded. N-linked (GlcNAc...) asparagine glycosylation is present at asparagine 113. The active-site Acyl-ester intermediate is serine 207. Cysteine 259 and cysteine 271 are disulfide-bonded. Residue asparagine 421 is glycosylated (N-linked (GlcNAc...) asparagine). Histidine 467 (charge relay system) is an active-site residue. Asparagine 507 is a glycosylation site (N-linked (GlcNAc...) asparagine). An intrachain disulfide couples cysteine 515 to cysteine 536.

The protein belongs to the type-B carboxylesterase/lipase family.

It is found in the secreted. The enzyme catalyses a carboxylic ester + H2O = an alcohol + a carboxylate + H(+). In Drosophila persimilis (Fruit fly), this protein is Esterase-5C (Est-5C).